The primary structure comprises 195 residues: Putative CheY-P phosphatase CheC1 (195 aa).

It belongs to the CheC family.

Its function is as follows. Catalyzes the dephosphorylation of CheY-P. The protein is Putative CheY-P phosphatase CheC1 (cheC1) of Halobacterium salinarum (strain ATCC 29341 / DSM 671 / R1).